Reading from the N-terminus, the 380-residue chain is Ribosomal RNA large subunit methyltransferase F (380 aa).

Disordered stretches follow at residues 1-54 and 260-279; these read MSHK…PRNA and SQVM…ATDK. A compositionally biased stretch (low complexity) spans 21–32; sequence QRQVVSKSSLQK. Over residues 44–53 the composition is skewed to basic residues; it reads QKSKALHPRN. Over residues 260–270 the composition is skewed to low complexity; the sequence is SQVMSPQVQPS.

It belongs to the methyltransferase superfamily. METTL16/RlmF family.

The protein localises to the cytoplasm. It carries out the reaction adenosine(1618) in 23S rRNA + S-adenosyl-L-methionine = N(6)-methyladenosine(1618) in 23S rRNA + S-adenosyl-L-homocysteine + H(+). Functionally, specifically methylates the adenine in position 1618 of 23S rRNA. The sequence is that of Ribosomal RNA large subunit methyltransferase F from Shewanella pealeana (strain ATCC 700345 / ANG-SQ1).